The chain runs to 417 residues: Chaperone SurA (417 aa).

Residues 1 to 12 (MGAALLCSFAHA) form the signal peptide. PpiC domains follow at residues 163-264 (SEEY…KLEE) and 273-372 (RDEV…QVLG).

It localises to the periplasm. The enzyme catalyses [protein]-peptidylproline (omega=180) = [protein]-peptidylproline (omega=0). Its function is as follows. Chaperone involved in the correct folding and assembly of outer membrane proteins. Recognizes specific patterns of aromatic residues and the orientation of their side chains, which are found more frequently in integral outer membrane proteins. May act in both early periplasmic and late outer membrane-associated steps of protein maturation. The polypeptide is Chaperone SurA (Pseudomonas aeruginosa (strain ATCC 15692 / DSM 22644 / CIP 104116 / JCM 14847 / LMG 12228 / 1C / PRS 101 / PAO1)).